Here is a 235-residue protein sequence, read N- to C-terminus: Ribonuclease 3 (235 aa).

Residues 6–131 (IDQLFKLTGH…LIAVMYLDGG (126 aa)) enclose the RNase III domain. Glutamate 44 contributes to the Mg(2+) binding site. Aspartate 48 is an active-site residue. 2 residues coordinate Mg(2+): aspartate 117 and glutamate 120. Glutamate 120 is a catalytic residue. One can recognise a DRBM domain in the interval 156-225 (DAKTELQEWA…AEKILRREGV (70 aa)).

The protein belongs to the ribonuclease III family. As to quaternary structure, homodimer. Requires Mg(2+) as cofactor.

Its subcellular location is the cytoplasm. The enzyme catalyses Endonucleolytic cleavage to 5'-phosphomonoester.. In terms of biological role, digests double-stranded RNA. Involved in the processing of primary rRNA transcript to yield the immediate precursors to the large and small rRNAs (23S and 16S). Processes some mRNAs, and tRNAs when they are encoded in the rRNA operon. Processes pre-crRNA and tracrRNA of type II CRISPR loci if present in the organism. The sequence is that of Ribonuclease 3 from Bartonella tribocorum (strain CIP 105476 / IBS 506).